The primary structure comprises 396 residues: Elongation factor Tu (396 aa).

The tr-type G domain maps to lysine 10 to valine 206. Residues glycine 19–threonine 26 form a G1 region. Position 19–26 (glycine 19–threonine 26) interacts with GTP. Threonine 26 lines the Mg(2+) pocket. A G2 region spans residues glycine 60–serine 64. The interval aspartate 81–glycine 84 is G3. GTP contacts are provided by residues aspartate 81–histidine 85 and asparagine 136–aspartate 139. The segment at asparagine 136–aspartate 139 is G4. The tract at residues serine 174–leucine 176 is G5.

This sequence belongs to the TRAFAC class translation factor GTPase superfamily. Classic translation factor GTPase family. EF-Tu/EF-1A subfamily. As to quaternary structure, monomer.

Its subcellular location is the cytoplasm. It catalyses the reaction GTP + H2O = GDP + phosphate + H(+). GTP hydrolase that promotes the GTP-dependent binding of aminoacyl-tRNA to the A-site of ribosomes during protein biosynthesis. This Legionella pneumophila (strain Lens) protein is Elongation factor Tu.